Consider the following 687-residue polypeptide: CWF19-like protein 2 homolog (687 aa).

Residues 6 to 51 (FESGREKDKARQELREAREAMLQQAKERAELRGQRERQKELRGEAD) adopt a coiled-coil conformation. The segment covering 24 to 50 (EAMLQQAKERAELRGQRERQKELRGEA) has biased composition (basic and acidic residues). The interval 24-281 (EAMLQQAKER…PKSRPSCLTD (258 aa)) is disordered. The span at 66–92 (KKSKKNVSKHKSRSKSKSSKKSRKHRN) shows a compositional bias: basic residues. Over residues 93-107 (SSSSSESSTSSSSSF) the composition is skewed to low complexity. A coiled-coil region spans residues 108-131 (SEDEKERKRRKKKSKRSRKESASE). Residues 114 to 125 (RKRRKKKSKRSR) show a composition bias toward basic residues. Phosphoserine is present on residues S128 and S130. Basic and acidic residues-rich tracts occupy residues 146–157 (VTKKEPPQRDDW) and 168–180 (FSRE…KPNE). A coiled-coil region spans residues 290–325 (KAIKAELKGKKELAAELNQQLEAARKERAEFIASGE). The segment at 355–383 (VRPLVQSGDPNESYGGRMGPKRGSKKVDT) is disordered. The stretch at 444–475 (KQISASDAEKREMQSAIREHEKLVATLDNCER) forms a coiled coil.

The protein belongs to the CWF19 family.

The polypeptide is CWF19-like protein 2 homolog (Drosophila melanogaster (Fruit fly)).